Reading from the N-terminus, the 109-residue chain is Large ribosomal subunit protein uL22 (109 aa).

The protein belongs to the universal ribosomal protein uL22 family. In terms of assembly, part of the 50S ribosomal subunit.

Functionally, this protein binds specifically to 23S rRNA; its binding is stimulated by other ribosomal proteins, e.g. L4, L17, and L20. It is important during the early stages of 50S assembly. It makes multiple contacts with different domains of the 23S rRNA in the assembled 50S subunit and ribosome. In terms of biological role, the globular domain of the protein is located near the polypeptide exit tunnel on the outside of the subunit, while an extended beta-hairpin is found that lines the wall of the exit tunnel in the center of the 70S ribosome. The polypeptide is Large ribosomal subunit protein uL22 (Bordetella avium (strain 197N)).